The following is a 220-amino-acid chain: 7-cyano-7-deazaguanine synthase (220 aa).

11 to 21 provides a ligand contact to ATP; the sequence is VSGGMDSVTLM. Residues cysteine 186, cysteine 194, cysteine 197, and cysteine 200 each coordinate Zn(2+).

It belongs to the QueC family. It depends on Zn(2+) as a cofactor.

It carries out the reaction 7-carboxy-7-deazaguanine + NH4(+) + ATP = 7-cyano-7-deazaguanine + ADP + phosphate + H2O + H(+). Its pathway is purine metabolism; 7-cyano-7-deazaguanine biosynthesis. Catalyzes the ATP-dependent conversion of 7-carboxy-7-deazaguanine (CDG) to 7-cyano-7-deazaguanine (preQ(0)). The protein is 7-cyano-7-deazaguanine synthase of Porphyromonas gingivalis (strain ATCC BAA-308 / W83).